A 479-amino-acid polypeptide reads, in one-letter code: MGRAFEYVILGGGVAAGYAALEFVRRNGGASSQELCIISDEHFAPYERPALSKGYLLPQDAPRLPAFHTCVGSKDELLTEEWYNEHGIVLVLGTRVISADVRQKTLLTSSGETISYKTLIVATGARAVKLEEFGVSGSDARNVCYLRNVEDADKLVGVMRSCPGGNAVVVGGGYIGMECAAALVTNNIKVTMVFPKKHCMGRLFTPKIAEFYESYYASRGVTFVKEAAVTSMQISAGKVTAVNLGNGRRLPADMVVVGVGARANTGLFDGQLVMENGGIKVNGRMQASDASVYAVGDVAAFPVKLFGGDVRRLEHVDCARRTARHAVAAMLEGTGSVGHIDYLPFFYSRVFSLSWQFYGDNAGEAVHFGDLAPPGDGDGAAPKFGAYWVRDGRVAGAFLEGGSRQEYEAVAAAVRRGAAVADVAELERRGLAFATQATGGGGKPTCAWHATVGVAAAVSIAAFACWYGWQAPYVLKRDF.

Residues M1–R3 are Cytoplasmic-facing. The chain crosses the membrane as a helical span at residues A4–V24. FAD is bound by residues G12–A15, E41, R48, K53, and R147–N148. Topologically, residues R25–T445 are peroxisomal. NAD(+) contacts are provided by residues G172–E178, R202, and G260. NADP(+)-binding positions include Y174–E178, R202, and G260. D297 is a binding site for FAD. E314 to H315 lines the NAD(+) pocket. Position 314–315 (E314–H315) interacts with NADP(+). V316 is an FAD binding site. R320 is an L-ascorbate binding site. Y347 lines the FAD pocket. Y347 contacts NAD(+). Y347 is a binding site for NADP(+). R349 provides a ligand contact to L-ascorbate. Residues C446–W466 traverse the membrane as a helical segment. Topologically, residues Y467–F479 are cytoplasmic.

This sequence belongs to the FAD-dependent oxidoreductase family. Requires FAD as cofactor.

It localises to the peroxisome membrane. It carries out the reaction 2 monodehydro-L-ascorbate radical + NADH + H(+) = 2 L-ascorbate + NAD(+). In terms of biological role, catalyzes the conversion of monodehydroascorbate to ascorbate, oxidizing NADH in the process. Ascorbate is a major antioxidant against reactive oxygen species (ROS) and nitric oxide (NO). This Oryza sativa subsp. japonica (Rice) protein is Monodehydroascorbate reductase 1, peroxisomal.